Consider the following 283-residue polypeptide: NAD kinase (283 aa).

The active-site Proton acceptor is the D68. NAD(+) contacts are provided by residues 68–69 (DG), 142–143 (ND), R153, D172, 183–188 (TAYSLS), and Q242.

The protein belongs to the NAD kinase family. Requires a divalent metal cation as cofactor.

The protein resides in the cytoplasm. The catalysed reaction is NAD(+) + ATP = ADP + NADP(+) + H(+). In terms of biological role, involved in the regulation of the intracellular balance of NAD and NADP, and is a key enzyme in the biosynthesis of NADP. Catalyzes specifically the phosphorylation on 2'-hydroxyl of the adenosine moiety of NAD to yield NADP. The polypeptide is NAD kinase (Thermoanaerobacter pseudethanolicus (strain ATCC 33223 / 39E) (Clostridium thermohydrosulfuricum)).